Reading from the N-terminus, the 427-residue chain is 3-phosphoshikimate 1-carboxyvinyltransferase (427 aa).

Residues Lys-23, Ser-24, and Arg-28 each coordinate 3-phosphoshikimate. Position 23 (Lys-23) interacts with phosphoenolpyruvate. Phosphoenolpyruvate contacts are provided by Gly-97 and Arg-125. 3-phosphoshikimate contacts are provided by Ser-170, Ser-171, Gln-172, Ser-198, Asp-314, Asn-337, and Lys-341. Residue Gln-172 coordinates phosphoenolpyruvate. Residue Asp-314 is the Proton acceptor of the active site. Positions 345, 387, and 412 each coordinate phosphoenolpyruvate.

The protein belongs to the EPSP synthase family. As to quaternary structure, monomer.

Its subcellular location is the cytoplasm. The catalysed reaction is 3-phosphoshikimate + phosphoenolpyruvate = 5-O-(1-carboxyvinyl)-3-phosphoshikimate + phosphate. It functions in the pathway metabolic intermediate biosynthesis; chorismate biosynthesis; chorismate from D-erythrose 4-phosphate and phosphoenolpyruvate: step 6/7. Functionally, catalyzes the transfer of the enolpyruvyl moiety of phosphoenolpyruvate (PEP) to the 5-hydroxyl of shikimate-3-phosphate (S3P) to produce enolpyruvyl shikimate-3-phosphate and inorganic phosphate. This Buchnera aphidicola subsp. Acyrthosiphon pisum (strain 5A) protein is 3-phosphoshikimate 1-carboxyvinyltransferase.